The sequence spans 56 residues: uncharacterized protein (56 aa).

The segment covering 21–38 (HTHTPHPHHTHTHTHHTP) has biased composition (basic residues). The interval 21-40 (HTHTPHPHHTHTHTHHTPTH) is disordered.

This is an uncharacterized protein from Saccharomyces cerevisiae (strain ATCC 204508 / S288c) (Baker's yeast).